Here is a 758-residue protein sequence, read N- to C-terminus: 5-methyltetrahydropteroyltriglutamate--homocysteine methyltransferase (758 aa).

Residues 16–19 and lysine 116 each bind 5-methyltetrahydropteroyltri-L-glutamate; that span reads RELK. Residues 436–438 and glutamate 489 each bind L-homocysteine; that span reads IGS. L-methionine is bound by residues 436-438 and glutamate 489; that span reads IGS. Residues 520–521 and tryptophan 566 contribute to the 5-methyltetrahydropteroyltri-L-glutamate site; that span reads RC. Residue aspartate 604 participates in L-homocysteine binding. Residue aspartate 604 coordinates L-methionine. Position 610 (glutamate 610) interacts with 5-methyltetrahydropteroyltri-L-glutamate. Residues histidine 646, cysteine 648, and glutamate 670 each contribute to the Zn(2+) site. Histidine 699 serves as the catalytic Proton donor. Cysteine 731 lines the Zn(2+) pocket.

Belongs to the vitamin-B12 independent methionine synthase family. Requires Zn(2+) as cofactor.

It carries out the reaction 5-methyltetrahydropteroyltri-L-glutamate + L-homocysteine = tetrahydropteroyltri-L-glutamate + L-methionine. Its pathway is amino-acid biosynthesis; L-methionine biosynthesis via de novo pathway; L-methionine from L-homocysteine (MetE route): step 1/1. Its function is as follows. Catalyzes the transfer of a methyl group from 5-methyltetrahydrofolate to homocysteine resulting in methionine formation. This Xylella fastidiosa (strain 9a5c) protein is 5-methyltetrahydropteroyltriglutamate--homocysteine methyltransferase.